A 901-amino-acid chain; its full sequence is MSYKVIVPATVLPPWLRVGENWIFARHRRTEVGVVLPANTKFRVRADFSRAGFTRPVIVRLLNNNRSTEREINLNNDQWMEVEHAHESVPFVDWLVGEKNTMAEVYFEIDGPHIPLPVYVFNTRPVEHFKSEYRQSSSGYCFLYLDLVCMLVPPASKNALLDVNIFELHQFYNEIINYYDDLCGLVEDPYADTVDSNLPNKAAFVKADAGGPGGAYYGPFWTAPASSNLGDYLRISPTNWMVIHELGHAYDFVFTVNTILIEIWNNSLCDRIQYKWMNKIKRQQLARVYENRRPQKEATIQALIDNNSPFDNWGFFERLIIFTWLYNPQRGLDTLRNINHSYRVHATRNSSIPYPQIWSWLTTSAYDNFWLYFNLVGVYPADFYVNEHNKVVHFNLHLRALALGQSVRYPIKYIITDFDLVSKNYDIKQYLESNFDLVIPEELRQTDLLADVRVVCVIDDPSQIVGEPFSVYDGNERVFESTVATDGNMYLVGVGPGVYTLRAPRGKNKRYKLHLAHSPREPVHPANDHMYLLVTYPYYNQTLTYTPYVNSDLAVDMAHLFGSNDRRYVATIYFNPFEQTVTVHLNNIRAGRENNTTLYFEMVISNPFNGQSQTFTILEDNPTLRQGYYKFDVVTYSSIRLNMSVAGRLLFRRYIFAGGTTTLTMFPNQVLEPNLFPDGSALNRTLARLREQAAFLDNYSQLMYIENELRDTIYLASQLVDPASDEFVKYYPDYFRDPHTYVYLFRFRGLGDFVLLDLQIVPLLNLATVRIANIQNGPHSYFDTLYFKVELRDTNGAIVFSYSRRGNEPMTPEHHKFEVYSGYTVELFMREPGNRLQLIVNKMLDTALPSTQNIFARITDTQLVVGDTSIEDNLVTSINVDCGDDDNQKIRVVETLKMIAF.

Residues 27–330 form the Peptidase M60 domain; sequence HRRTEVGVVL…IFTWLYNPQR (304 aa). N-linked (GlcNAc...) asparagine; by host glycans are attached at residues N65, N265, N339, N349, N540, N594, N595, N642, N683, and N698.

In terms of biological role, involved in disruption of the peritrophic membrane and fusion of nucleocapsids with midgut cells. This is Viral-enhancing factor (VEF) from Trichoplusia ni (Cabbage looper).